The sequence spans 356 residues: DNA integrity scanning protein DisA (356 aa).

In terms of domain architecture, DAC spans 7-147 (NKNMLYALKM…EKYVVEDISK (141 aa)). Residues G74, L92, and 105–109 (TRHRT) contribute to the ATP site.

This sequence belongs to the DisA family. In terms of assembly, homooctamer. It depends on Mg(2+) as a cofactor.

The catalysed reaction is 2 ATP = 3',3'-c-di-AMP + 2 diphosphate. Its function is as follows. Participates in a DNA-damage check-point that is active prior to asymmetric division when DNA is damaged. DisA forms globular foci that rapidly scan along the chromosomes during sporulation, searching for lesions. When a lesion is present, DisA pauses at the lesion site. This triggers a cellular response that culminates in a temporary block in sporulation initiation. Also has diadenylate cyclase activity, catalyzing the condensation of 2 ATP molecules into cyclic di-AMP (c-di-AMP). c-di-AMP acts as a signaling molecule that couples DNA integrity with progression of sporulation. The rise in c-di-AMP level generated by DisA while scanning the chromosome, operates as a positive signal that advances sporulation; upon encountering a lesion, the DisA focus arrests at the damaged site and halts c-di-AMP synthesis. This chain is DNA integrity scanning protein DisA, found in Clostridioides difficile (strain 630) (Peptoclostridium difficile).